The sequence spans 436 residues: Chorion-specific transcription factor GCMa (436 aa).

Positions 14 to 169 (LSWDINDMKL…KLEAEARRAM (156 aa)) form a DNA-binding region, GCM. Residues cysteine 76, cysteine 82, cysteine 86, cysteine 113, cysteine 116, cysteine 125, histidine 152, and histidine 154 each coordinate Zn(2+).

In terms of processing, polyubiquitinated in the presence of UBE2D2 and FBXW2 (in vitro).

It is found in the nucleus. Functionally, transcription factor involved in the control of expression of placental growth factor (PGF) and other placenta-specific genes. Binds to the trophoblast-specific element 2 (TSE2) of the aromatase gene enhancer. Binds to the SYDE1 promoter. Has a central role in mediating the differentiation of trophoblast cells along both the villous and extravillous pathways in placental development. This chain is Chorion-specific transcription factor GCMa (Gcm1), found in Rattus norvegicus (Rat).